Consider the following 503-residue polypeptide: Cytochrome P450 11B1, mitochondrial (503 aa).

A mitochondrion-targeting transit peptide spans 1–24 (MALRAKAEVCMAVPWLSLQRAQAL). A heme-binding site is contributed by Cys450.

It belongs to the cytochrome P450 family. Heme serves as cofactor. Expressed in the zona fasciculata/reticularis of the adrenal cortex.

The protein localises to the mitochondrion inner membrane. It catalyses the reaction a steroid + 2 reduced [adrenodoxin] + O2 + 2 H(+) = an 11beta-hydroxysteroid + 2 oxidized [adrenodoxin] + H2O. The catalysed reaction is 11-deoxycortisol + 2 reduced [adrenodoxin] + O2 + 2 H(+) = cortisol + 2 oxidized [adrenodoxin] + H2O. The enzyme catalyses 21-hydroxyprogesterone + 2 reduced [adrenodoxin] + O2 + 2 H(+) = corticosterone + 2 oxidized [adrenodoxin] + H2O. It functions in the pathway steroid biosynthesis; glucocorticoid biosynthesis. Its pathway is steroid hormone biosynthesis. In terms of biological role, a cytochrome P450 monooxygenase involved in the biosynthesis of adrenal corticoids. Catalyzes a variety of reactions that are essential for many species, including detoxification, defense, and the formation of endogenous chemicals like steroid hormones. Steroid 11beta, 18- and 19-hydroxylase with preferred regioselectivity at 11beta, then 18, and lastly 19. Catalyzes the hydroxylation of 11-deoxycortisol and 11-deoxycorticosterone (21-hydroxyprogesterone) at 11beta position, yielding cortisol or corticosterone, respectively, but cannot produce aldosterone. Mechanistically, uses molecular oxygen inserting one oxygen atom into a substrate for hydroxylation and reducing the second into a water molecule. Two electrons are provided by NADPH via a two-protein mitochondrial transfer system comprising flavoprotein FDXR (adrenodoxin/ferredoxin reductase) and nonheme iron-sulfur protein FDX1 or FDX2 (adrenodoxin/ferredoxin). Due to its lack of 18-oxidation activity, it is incapable of generating aldosterone. Could also be involved in the androgen metabolic pathway. This Homo sapiens (Human) protein is Cytochrome P450 11B1, mitochondrial.